A 438-amino-acid polypeptide reads, in one-letter code: Probable inactive protein kinase 38 (438 aa).

The Protein kinase domain maps to 77–340; that stretch reads PRFRLALGKG…FTELQPQYFL (264 aa).

This sequence belongs to the protein kinase superfamily. Tyr protein kinase family.

This is Probable inactive protein kinase 38 (36) from Equus caballus (Horse).